The following is a 651-amino-acid chain: Threonine--tRNA ligase (651 aa).

A TGS domain is found at 1–61; it reads MIKITFPDNS…NDDATVKLLK (61 aa). The catalytic stretch occupies residues 242–541; it reads DHRKIGKEMD…LIEHTAGKFP (300 aa). Zn(2+)-binding residues include Cys-337, His-388, and His-518.

This sequence belongs to the class-II aminoacyl-tRNA synthetase family. Homodimer. Zn(2+) is required as a cofactor.

The protein localises to the cytoplasm. It catalyses the reaction tRNA(Thr) + L-threonine + ATP = L-threonyl-tRNA(Thr) + AMP + diphosphate + H(+). Functionally, catalyzes the attachment of threonine to tRNA(Thr) in a two-step reaction: L-threonine is first activated by ATP to form Thr-AMP and then transferred to the acceptor end of tRNA(Thr). Also edits incorrectly charged L-seryl-tRNA(Thr). The protein is Threonine--tRNA ligase of Parabacteroides distasonis (strain ATCC 8503 / DSM 20701 / CIP 104284 / JCM 5825 / NCTC 11152).